The sequence spans 348 residues: GMP reductase 2 (348 aa).

Residues 26 to 27, K78, 129 to 131, and 180 to 181 each bind NADP(+); these read SR, DVA, and IG. K(+) is bound by residues G181, G183, and C186. Catalysis depends on C186, which acts as the Thioimidate intermediate. T188 functions as the Proton donor/acceptor in the catalytic mechanism. A K(+)-binding site is contributed by R189. Residues 219–221, 242–243, 268–270, and 286–290 contribute to the GMP site; these read DGG, GG, GMS, and RASEG. Residues M269 and 285–286 contribute to the NADP(+) site; that span reads YR. The residue at position 291 (K291) is an N6-acetyllysine. Residue 314-317 participates in NADP(+) binding; that stretch reads STCT.

This sequence belongs to the IMPDH/GMPR family. GuaC type 1 subfamily. As to quaternary structure, homotetramer. Highly expressed in heart, skeletal muscle, kidney, brain, liver, prostate, spleen, placenta, testis and ovary. Low expression in colon, thymus and peripheral blood leukocytes.

The catalysed reaction is IMP + NH4(+) + NADP(+) = GMP + NADPH + 2 H(+). Functionally, catalyzes the irreversible NADPH-dependent deamination of GMP to IMP. It functions in the conversion of nucleobase, nucleoside and nucleotide derivatives of G to A nucleotides, and in maintaining the intracellular balance of A and G nucleotides. Plays a role in modulating cellular differentiation. This Homo sapiens (Human) protein is GMP reductase 2.